The following is a 691-amino-acid chain: ATP-dependent RNA helicase MRH4, mitochondrial (691 aa).

A mitochondrion-targeting transit peptide spans 1–31 (MLIGQVSRLSAIPPLALQHTLRPLHSSSVLA). Positions 31–148 (AAGGKRPKQS…ATMPPNLTPR (118 aa)) are disordered. Over residues 39–49 (QSPSHSRNSPR) the composition is skewed to polar residues. The segment covering 50–68 (QKPDWEKRGSNRGRSEQPR) has biased composition (basic and acidic residues). A compositionally biased stretch (low complexity) spans 94-103 (SDSSSGSSAS). Positions 111–126 (VPTSSRRLLPFSSSDT) are enriched in polar residues. Residues 183-213 (RTFDDFGLEEGLVKSLKGLYGEDGKTTPIET) carry the Q motif motif. The 209-residue stretch at 225–433 (ASAPIGSQRV…TTNPFFTKKE (209 aa)) folds into the Helicase ATP-binding domain. 238–245 (AETGSGKT) provides a ligand contact to ATP. Positions 382 to 385 (DEAD) match the DEAD box motif. Positions 474 to 691 (TLAEDAKAAK…VGAMGKRVRT (218 aa)) constitute a Helicase C-terminal domain. Residues 644 to 667 (LGEGAKNNKGGKGQGPLKKDGKTA) are disordered.

Belongs to the DEAD box helicase family. MRH4 subfamily.

The protein resides in the mitochondrion. The catalysed reaction is ATP + H2O = ADP + phosphate + H(+). Its function is as follows. ATP-binding RNA helicase involved in mitochondrial RNA metabolism. Required for maintenance of mitochondrial DNA. The protein is ATP-dependent RNA helicase MRH4, mitochondrial (MRH4) of Cryptococcus neoformans var. neoformans serotype D (strain JEC21 / ATCC MYA-565) (Filobasidiella neoformans).